The sequence spans 286 residues: NADPH-dependent 7-cyano-7-deazaguanine reductase (286 aa).

92 to 94 is a binding site for substrate; it reads IES. Position 94-95 (94-95) interacts with NADPH; it reads SK. Cysteine 194 serves as the catalytic Thioimide intermediate. Aspartate 201 serves as the catalytic Proton donor. 233-234 provides a ligand contact to substrate; that stretch reads HE. 262 to 263 provides a ligand contact to NADPH; that stretch reads RG.

Belongs to the GTP cyclohydrolase I family. QueF type 2 subfamily. Homodimer.

The protein localises to the cytoplasm. The enzyme catalyses 7-aminomethyl-7-carbaguanine + 2 NADP(+) = 7-cyano-7-deazaguanine + 2 NADPH + 3 H(+). Its pathway is tRNA modification; tRNA-queuosine biosynthesis. In terms of biological role, catalyzes the NADPH-dependent reduction of 7-cyano-7-deazaguanine (preQ0) to 7-aminomethyl-7-deazaguanine (preQ1). This Shewanella sp. (strain MR-7) protein is NADPH-dependent 7-cyano-7-deazaguanine reductase.